The following is a 242-amino-acid chain: uncharacterized protein (242 aa).

It belongs to the IIV-6 415R family.

This is an uncharacterized protein from Invertebrate iridescent virus 6 (IIV-6).